Consider the following 206-residue polypeptide: uncharacterized protein (206 aa).

Residues 32–201 enclose the MurNAc-LAA domain; it reads VYIDAGHGGE…AADAIVNGID (170 aa).

The protein belongs to the N-acetylmuramoyl-L-alanine amidase 3 family.

This is an uncharacterized protein from Bacillus subtilis (strain 168).